The following is a 567-amino-acid chain: MGRGLLRGLWPLHIVLWTRIASTIPPHVPKSVNSDLMAGDNSGAVKLPQLCKFCDVTLSTCDNQKSCMSNCSVTSICEKPQEVCVAVWRKNDKNITLETVCHDPKFTYHGFTLEDATSPTCVMKEKKRAGETFFMCSCNTEECNDYIIFNEEYTTSSPDLLLVIIQVTGVSLLPPLGIAIAVIAIFYCYRVHRQQKLSPSWESSKPRKLMDFSDNCAIILEDDRSDISSTCANNINHNTELLPIELDTLVGKGRFAEVYKAKLKQNTSEQFETVAVKIFPYEEYSSWKTEKDIFSDINLKHENILQFLTAEERKTEMGKQYWLITAFHAKGNLQEYLTRHVISWEDLRKLGSSLARGIAHLHSDHTPCGRPKMPIVHRDLKSSNILVKNDLTCCLCDFGLSLRLDPTLSVDDLANSGQVGTARYMAPEVLESRMNLENMESFKQTDVYSMALVLWEMTSRCNAVGEVKDYEPPFGSKVREHPCVESMKDNVLRDRGRPEIPSFWLNHQGIQIVCETLTECWDHDPEARLTAQCVAERFSELEHPDRLSGRSCSQEKIPEDGSLNTTK.

The signal sequence occupies residues 1–23; it reads MGRGLLRGLWPLHIVLWTRIAST. Topologically, residues 24–166 are extracellular; it reads IPPHVPKSVN…SPDLLLVIIQ (143 aa). Intrachain disulfides connect Cys51–Cys84, Cys54–Cys71, Cys61–Cys67, Cys77–Cys101, Cys121–Cys136, and Cys138–Cys143. 2 N-linked (GlcNAc...) asparagine glycosylation sites follow: Asn70 and Asn94. Residues 167 to 187 form a helical membrane-spanning segment; sequence VTGVSLLPPLGIAIAVIAIFY. Over 188-567 the chain is Cytoplasmic; it reads CYRVHRQQKL…PEDGSLNTTK (380 aa). The 303-residue stretch at 244–546 folds into the Protein kinase domain; the sequence is IELDTLVGKG…RFSELEHPDR (303 aa). ATP-binding positions include 250-258 and Lys277; that span reads VGKGRFAEV. Asp379 serves as the catalytic Proton acceptor. Residues Ser409, Ser548, and Ser553 each carry the phosphoserine modification. The tract at residues 546-567 is disordered; sequence RLSGRSCSQEKIPEDGSLNTTK.

It belongs to the protein kinase superfamily. TKL Ser/Thr protein kinase family. TGFB receptor subfamily. Homodimer. Heterohexamer; TGFB1, TGFB2 and TGFB3 homodimeric ligands assemble a functional receptor composed of two TGFBR1 and TGFBR2 heterodimers to form a ligand-receptor heterohexamer. The respective affinity of TGFRB1 and TGFRB2 for the ligands may modulate the kinetics of assembly of the receptor and may explain the different biological activities of TGFB1, TGFB2 and TGFB3. Component of a complex composed of TSC22D1 (via N-terminus), TGFBR1 and TGFBR2; the interaction between TSC22D1 and TGFBR1 is inhibited by SMAD7 and promoted by TGFB1. Interacts with DAXX. Interacts with DYNLT4. Interacts with ZFYVE9; ZFYVE9 recruits SMAD2 and SMAD3 to the TGF-beta receptor. Interacts with and is activated by SCUBE3; this interaction does not affect TGFB1-binding to TGFBR2. Interacts with VPS39; this interaction is independent of the receptor kinase activity and of the presence of TGF-beta. Interacts with CLU. Mg(2+) serves as cofactor. Mn(2+) is required as a cofactor. In terms of processing, phosphorylated on a Ser/Thr residue in the cytoplasmic domain.

It localises to the cell membrane. It is found in the membrane raft. It catalyses the reaction L-threonyl-[receptor-protein] + ATP = O-phospho-L-threonyl-[receptor-protein] + ADP + H(+). It carries out the reaction L-seryl-[receptor-protein] + ATP = O-phospho-L-seryl-[receptor-protein] + ADP + H(+). Its function is as follows. Transmembrane serine/threonine kinase forming with the TGF-beta type I serine/threonine kinase receptor, TGFBR1, the non-promiscuous receptor for the TGF-beta cytokines TGFB1, TGFB2 and TGFB3. Transduces the TGFB1, TGFB2 and TGFB3 signal from the cell surface to the cytoplasm and is thus regulating a plethora of physiological and pathological processes including cell cycle arrest in epithelial and hematopoietic cells, control of mesenchymal cell proliferation and differentiation, wound healing, extracellular matrix production, immunosuppression and carcinogenesis. The formation of the receptor complex composed of 2 TGFBR1 and 2 TGFBR2 molecules symmetrically bound to the cytokine dimer results in the phosphorylation and the activation of TGFRB1 by the constitutively active TGFBR2. Activated TGFBR1 phosphorylates SMAD2 which dissociates from the receptor and interacts with SMAD4. The SMAD2-SMAD4 complex is subsequently translocated to the nucleus where it modulates the transcription of the TGF-beta-regulated genes. This constitutes the canonical SMAD-dependent TGF-beta signaling cascade. Also involved in non-canonical, SMAD-independent TGF-beta signaling pathways. This is TGF-beta receptor type-2 (Tgfbr2) from Rattus norvegicus (Rat).